A 370-amino-acid polypeptide reads, in one-letter code: Cyclin-A3-4 (370 aa).

This sequence belongs to the cyclin family. Cyclin AB subfamily. As to quaternary structure, interacts with FZR2/CCS52A1, FZR1/CCS52A2 and FZR3/CCS52B.

This chain is Cyclin-A3-4 (CYCA3-4), found in Arabidopsis thaliana (Mouse-ear cress).